Reading from the N-terminus, the 457-residue chain is Multidrug resistance protein MdtK (457 aa).

The Cytoplasmic segment spans residues 1–10; that stretch reads MQKYISEARL. Residues 11-31 traverse the membrane as a helical segment; it reads LLALAIPVILAQIAQTAMGFV. Residues 32-52 lie on the Periplasmic side of the membrane; that stretch reads DTVMAGGYSATDMAAVAIGTS. The helical transmembrane segment at 53–73 threads the bilayer; the sequence is IWLPAILFGHGLLLALTPVIA. Residues 74–92 are Cytoplasmic-facing; sequence QLNGSGRRERIAHQVRQGF. The chain crosses the membrane as a helical span at residues 93 to 113; the sequence is WLAGFVSVLIMLVLWNAGYII. Over 114-126 the chain is Periplasmic; it reads RSMENIDPALADK. A helical membrane pass occupies residues 127–147; sequence AVGYLRALLWGAPGYLFFQVA. Over 148–159 the chain is Cytoplasmic; the sequence is RNQCEGLAKTKP. Residues 160–180 traverse the membrane as a helical segment; it reads GMVMGFIGLLVNIPVNYIFIY. Over 181-191 the chain is Periplasmic; it reads GHFGMPELSGV. A helical transmembrane segment spans residues 192 to 212; the sequence is GCGVATAAVYWAMFLAMVSYI. Residues 213–242 lie on the Cytoplasmic side of the membrane; it reads KRARSMRDIRNEKGTAKPDPAVMKRLIQLG. Residues 243 to 263 form a helical membrane-spanning segment; the sequence is LPIALALFFEVTLFAVVALLV. At 264–275 the chain is on the periplasmic side; that stretch reads SPLGIVDVAGHQ. Residues 276-296 form a helical membrane-spanning segment; sequence IALNFSSLMFVLPMSLAAAVT. The Cytoplasmic portion of the chain corresponds to 297 to 313; the sequence is IRVGYRLGQGSTLDAQT. A helical transmembrane segment spans residues 314-334; that stretch reads AARTGLMVGVCMATLTAIFTV. Over 335–349 the chain is Periplasmic; that stretch reads SLREQIALLYNDNPE. Residues 350-370 traverse the membrane as a helical segment; that stretch reads VVTLAAHLMLLAAVYQISDSI. Over 371–386 the chain is Cytoplasmic; the sequence is QVIGSGILRGYKDTRS. The chain crosses the membrane as a helical span at residues 387–407; the sequence is IFYITFTAYWVLGLPSGYILA. Over 408–417 the chain is Periplasmic; that stretch reads LTDLVVEPMG. A helical transmembrane segment spans residues 418-438; the sequence is PAGFWIGFIIGLTSAAIMMML. Over 439–457 the chain is Cytoplasmic; that stretch reads RMRFLQRLPSAIILQRASR.

Belongs to the multi antimicrobial extrusion (MATE) (TC 2.A.66.1) family. MdtK subfamily.

The protein localises to the cell inner membrane. Its function is as follows. Multidrug efflux pump that functions probably as a Na(+)/drug antiporter. The sequence is that of Multidrug resistance protein MdtK from Shigella dysenteriae serotype 1 (strain Sd197).